The chain runs to 254 residues: RNA polymerase sigma-D factor (254 aa).

The Polymerase core binding motif lies at 54–67 (DLMSLGMLGLYDAL). The H-T-H motif DNA-binding region spans 220–239 (LTEIGQVLNLSTSRISQIHS).

Monomer. Interacts transiently with the RNAP core.

Its function is as follows. Sigma factors are initiation factors that promote the attachment of RNA polymerase (RNAP) to specific initiation sites and are then released. This alternative sigma factor is required for the transcription of the flagellin and motility genes as well as for wild-type chemotaxis. Associates with the RNAP core during all growth phases with a peak at the transition to stationary phase. The protein is RNA polymerase sigma-D factor (sigD) of Bacillus subtilis (strain 168).